The chain runs to 96 residues: Protein C4 (96 aa).

Residue Gly2 is the site of N-myristoyl glycine; by host attachment. The interval 66-96 (STDDLQGEDSRQPMTLTPRQLTQEVSRRLLM) is disordered. Over residues 77-89 (QPMTLTPRQLTQE) the composition is skewed to polar residues.

Belongs to the geminiviridae protein AC4/C4 family.

The protein resides in the host cell membrane. Functionally, pathogenicity determinant. May act as a suppressor of RNA-mediated gene silencing, also known as post-transcriptional gene silencing (PTGS), a mechanism of plant viral defense that limits the accumulation of viral RNAs. This is Protein C4 from Cynanchum acutum (Tomato).